The primary structure comprises 201 residues: Probable nicotinate-nucleotide adenylyltransferase (201 aa).

The protein belongs to the NadD family.

It catalyses the reaction nicotinate beta-D-ribonucleotide + ATP + H(+) = deamido-NAD(+) + diphosphate. It functions in the pathway cofactor biosynthesis; NAD(+) biosynthesis; deamido-NAD(+) from nicotinate D-ribonucleotide: step 1/1. In terms of biological role, catalyzes the reversible adenylation of nicotinate mononucleotide (NaMN) to nicotinic acid adenine dinucleotide (NaAD). This chain is Probable nicotinate-nucleotide adenylyltransferase, found in Neisseria meningitidis serogroup C / serotype 2a (strain ATCC 700532 / DSM 15464 / FAM18).